Consider the following 255-residue polypeptide: MENKRPLILVSNDDGIMAKGISELIKFLRPLGEIVVMAPDAPRSGSGCALTVTQPVHYQLLKKDVGLTVYKCSGTPTDCIKLARNQILDRKPDLVVGGINHGDNSATNVHYSGTMGIVIEGCLNGIPSIGFSICDHAPGADFDAAGPYVRRIAAMVLEKGLPPLTCLNVNFPNTQEIKGVRICEQAKGHWSGEWQACPRRDDANFYWLTGEFIDHEPENEKNDHWALANGYVAITPTVVDMTAYHFMDELKSWEL.

Residues aspartate 13, aspartate 14, serine 44, and asparagine 100 each contribute to the a divalent metal cation site.

It belongs to the SurE nucleotidase family. Requires a divalent metal cation as cofactor.

It is found in the cytoplasm. The enzyme catalyses a ribonucleoside 5'-phosphate + H2O = a ribonucleoside + phosphate. Nucleotidase that shows phosphatase activity on nucleoside 5'-monophosphates. The chain is 5'-nucleotidase SurE from Bacteroides fragilis (strain ATCC 25285 / DSM 2151 / CCUG 4856 / JCM 11019 / LMG 10263 / NCTC 9343 / Onslow / VPI 2553 / EN-2).